The primary structure comprises 193 residues: Ribonuclease HII (193 aa).

The 179-residue stretch at 15–193 folds into the RNase H type-2 domain; that stretch reads YIVAGVDEAG…SYHRRSFKSC (179 aa). The a divalent metal cation site is built by aspartate 21, glutamate 22, and aspartate 112.

It belongs to the RNase HII family. Mn(2+) is required as a cofactor. It depends on Mg(2+) as a cofactor.

Its subcellular location is the cytoplasm. The catalysed reaction is Endonucleolytic cleavage to 5'-phosphomonoester.. Functionally, endonuclease that specifically degrades the RNA of RNA-DNA hybrids. The sequence is that of Ribonuclease HII (rnhB) from Rickettsia prowazekii (strain Madrid E).